A 131-amino-acid polypeptide reads, in one-letter code: Small ribosomal subunit protein uS8 (131 aa).

The protein belongs to the universal ribosomal protein uS8 family. As to quaternary structure, part of the 30S ribosomal subunit. Contacts proteins S5 and S12.

Its function is as follows. One of the primary rRNA binding proteins, it binds directly to 16S rRNA central domain where it helps coordinate assembly of the platform of the 30S subunit. This chain is Small ribosomal subunit protein uS8, found in Acinetobacter baumannii (strain AB307-0294).